Consider the following 360-residue polypeptide: 3-dehydroquinate synthase (360 aa).

NAD(+) is bound by residues 72-77, 106-110, 130-131, Lys-143, and Lys-152; these read DGEEYK, GVIGD, and TT. Glu-185, His-248, and His-265 together coordinate Zn(2+).

This sequence belongs to the sugar phosphate cyclases superfamily. Dehydroquinate synthase family. It depends on Co(2+) as a cofactor. The cofactor is Zn(2+). NAD(+) serves as cofactor.

The protein localises to the cytoplasm. It catalyses the reaction 7-phospho-2-dehydro-3-deoxy-D-arabino-heptonate = 3-dehydroquinate + phosphate. The protein operates within metabolic intermediate biosynthesis; chorismate biosynthesis; chorismate from D-erythrose 4-phosphate and phosphoenolpyruvate: step 2/7. In terms of biological role, catalyzes the conversion of 3-deoxy-D-arabino-heptulosonate 7-phosphate (DAHP) to dehydroquinate (DHQ). The chain is 3-dehydroquinate synthase from Geotalea uraniireducens (strain Rf4) (Geobacter uraniireducens).